We begin with the raw amino-acid sequence, 179 residues long: SCAN domain-containing protein 1 (179 aa).

Residues 1-108 form a disordered region; that stretch reads MAATEPILAA…GSRLGPETFR (108 aa). Low complexity predominate over residues 60–80; the sequence is AIPTPQAAASAAPELPLGPAP. The region spanning 108–166 is the SCAN box domain; that stretch reads RQRFRQFRYQDAAGPREAFRQLRELSRQWLRPDIRTKEQIVEMLVQEQLLAILPEAARA.

As to quaternary structure, interacts with ZNF202.

It is found in the nucleus. Functionally, may regulate transcriptional activity. This is SCAN domain-containing protein 1 (SCAND1) from Pongo pygmaeus (Bornean orangutan).